The sequence spans 375 residues: DNA replication and repair protein RecF (375 aa).

30–37 contacts ATP; that stretch reads GENAQGKT.

It belongs to the RecF family.

The protein localises to the cytoplasm. The RecF protein is involved in DNA metabolism; it is required for DNA replication and normal SOS inducibility. RecF binds preferentially to single-stranded, linear DNA. It also seems to bind ATP. The polypeptide is DNA replication and repair protein RecF (Bacillus thuringiensis (strain Al Hakam)).